The primary structure comprises 89 residues: UPF0213 protein LSEI_1587 (89 aa).

Residues 4–79 form the GIY-YIG domain; sequence KTYYFYVLLC…KHQTRHRKEV (76 aa).

Belongs to the UPF0213 family.

This Lacticaseibacillus paracasei (strain ATCC 334 / BCRC 17002 / CCUG 31169 / CIP 107868 / KCTC 3260 / NRRL B-441) (Lactobacillus paracasei) protein is UPF0213 protein LSEI_1587.